A 61-amino-acid chain; its full sequence is UPF0434 protein PSPPH_1629 (61 aa).

It belongs to the UPF0434 family.

The polypeptide is UPF0434 protein PSPPH_1629 (Pseudomonas savastanoi pv. phaseolicola (strain 1448A / Race 6) (Pseudomonas syringae pv. phaseolicola (strain 1448A / Race 6))).